The following is a 1624-amino-acid chain: Pappalysin-1 (1624 aa).

A signal peptide spans 1-22 (MRLWSWVLRLGLLSAALGCGLA). The propeptide occupies 23–81 (ERPRRVRRDPRAVRPPRPAAGPATCATRAARGRRASPPPPPGGAWEAVRVPRRRQQRAA). The tract at residues 28–93 (VRRDPRAVRP…AEEPSPPSRA (66 aa)) is disordered. Positions 42–51 (AGPATCATRA) are enriched in low complexity. Disulfide bonds link cysteine 141/cysteine 232, cysteine 324/cysteine 619, cysteine 329/cysteine 654, cysteine 411/cysteine 425, cysteine 421/cysteine 437, cysteine 454/cysteine 470, cysteine 471/cysteine 482, cysteine 580/cysteine 597, cysteine 584/cysteine 609, cysteine 707/cysteine 875, cysteine 710/cysteine 878, cysteine 750/cysteine 832, cysteine 772/cysteine 778, cysteine 944/cysteine 972, cysteine 957/cysteine 968, cysteine 980/cysteine 987, and cysteine 996/cysteine 1008. Residues 272 to 583 (RGLHTPLPQL…ISEIQSCSDP (312 aa)) form a metalloprotease region. Residues asparagine 387 and asparagine 398 are each glycosylated (N-linked (GlcNAc...) asparagine). Residue asparagine 426 is glycosylated (N-linked (GlcNAc...) asparagine). Residue asparagine 516 is glycosylated (N-linked (GlcNAc...) asparagine). Histidine 559 serves as a coordination point for Zn(2+). Glutamate 560 is a catalytic residue. Zn(2+) is bound by residues histidine 563 and histidine 569. Asparagine 598, asparagine 616, and asparagine 722 each carry an N-linked (GlcNAc...) asparagine glycan. The N-linked (GlcNAc...) asparagine glycan is linked to asparagine 822. A glycan (N-linked (GlcNAc...) asparagine) is linked at asparagine 1023. Intrachain disulfides connect cysteine 1033/cysteine 1067, cysteine 1048/cysteine 1136, cysteine 1189/cysteine 1202, cysteine 1212/cysteine 1266, cysteine 1224/cysteine 1235, cysteine 1239/cysteine 1277, cysteine 1282/cysteine 1326, cysteine 1297/cysteine 1307, cysteine 1311/cysteine 1339, cysteine 1343/cysteine 1396, cysteine 1359/cysteine 1370, cysteine 1374/cysteine 1407, cysteine 1412/cysteine 1455, cysteine 1425/cysteine 1435, cysteine 1439/cysteine 1468, cysteine 1475/cysteine 1536, cysteine 1489/cysteine 1499, cysteine 1503/cysteine 1551, and cysteine 1555/cysteine 1573. 5 Sushi domains span residues 1210–1279 (ADCP…ACEP), 1280–1341 (VDCG…LCEL), 1342–1409 (MCLA…TCVP), 1410–1470 (VTCD…VCRE), and 1473–1553 (GQCS…HCVK). Residues asparagine 1219 and asparagine 1223 are each glycosylated (N-linked (GlcNAc...) asparagine). An N-linked (GlcNAc...) asparagine glycan is attached at asparagine 1320. N-linked (GlcNAc...) asparagine glycosylation is present at asparagine 1516.

It belongs to the peptidase M43B family. In terms of assembly, homodimer; disulfide-linked. In pregnancy serum, predominantly found as a disulfide-linked 2:2 heterotetramer with the proform of PRG2. It depends on Zn(2+) as a cofactor. As to expression, detected in kidney, spleen, brain, ovary, breast, skin, prostate, uterus, and placenta.

The protein localises to the secreted. It carries out the reaction Cleavage of the 135-Met-|-Lys-136 bond in insulin-like growth factor binding protein (IGFBP)-4, and the 143-Ser-|-Lys-144 bond in IGFBP-5.. Its function is as follows. Metalloproteinase which specifically cleaves IGFBP-4 and IGFBP-5, resulting in release of bound IGF. Cleavage of IGFBP-4 is dramatically enhanced by the presence of IGF, whereas cleavage of IGFBP-5 is slightly inhibited by the presence of IGF. Isoform 2 cleaves IGFBP-4 very slowly compared to PAPP-A, but its ability to cleave IGFBP-5 is unaffected. In Mus musculus (Mouse), this protein is Pappalysin-1 (Pappa).